A 494-amino-acid chain; its full sequence is Sugar phosphate exchanger 3 (494 aa).

A helical membrane pass occupies residues 16–36; sequence FSHHHVVVFLLTFFSYSLLHA. Asparagine 58 is a glycosylation site (N-linked (GlcNAc...) asparagine). 5 consecutive transmembrane segments (helical) span residues 81-101, 113-133, 147-167, 177-197, and 209-229; these read TLFL…GLFI, WVLS…GALT, LWIV…AVMG, VVFG…ACLA, and FLVT…GLLV. Asparagine 266 is a glycosylation site (N-linked (GlcNAc...) asparagine). 6 helical membrane passes run 297 to 317, 333 to 353, 357 to 377, 386 to 406, 428 to 448, and 452 to 472; these read LAYA…PFYL, IWYD…SDVL, APVL…YSRS, LLMT…SSAI, GIVD…VSLI, and LGWM…IVFI.

This sequence belongs to the major facilitator superfamily. Organophosphate:Pi antiporter (OPA) (TC 2.A.1.4) family. As to quaternary structure, interacts with ATRAID; the interaction is direct and both proteins are mutually dependent for their stability. In terms of processing, glycosylated. Expressed in liver, kidney, intestine and pancreas.

It localises to the endoplasmic reticulum membrane. The protein localises to the lysosome membrane. Its function is as follows. Unlike the other SLC37 members, lacks glucose-6-phosphate antiporter activity. In osteoclasts, forms a transporter complex with ATRAID for nitrogen-containing-bisphophonates (N-BPs) required for releasing N-BP molecules that have trafficked to lysosomes through fluid-phase endocytosis into the cytosol. This Homo sapiens (Human) protein is Sugar phosphate exchanger 3.